The chain runs to 115 residues: Holo-[acyl-carrier-protein] synthase (115 aa).

Residues Asp8 and Glu50 each coordinate Mg(2+).

It belongs to the P-Pant transferase superfamily. AcpS family. Mg(2+) is required as a cofactor.

The protein resides in the cytoplasm. The catalysed reaction is apo-[ACP] + CoA = holo-[ACP] + adenosine 3',5'-bisphosphate + H(+). Transfers the 4'-phosphopantetheine moiety from coenzyme A to a Ser of acyl-carrier-protein. This chain is Holo-[acyl-carrier-protein] synthase, found in Renibacterium salmoninarum (strain ATCC 33209 / DSM 20767 / JCM 11484 / NBRC 15589 / NCIMB 2235).